Consider the following 475-residue polypeptide: Phosphoethanolamine N-methyltransferase 1 (475 aa).

The protein belongs to the class I-like SAM-binding methyltransferase superfamily.

It carries out the reaction phosphoethanolamine + S-adenosyl-L-methionine = N-methylethanolamine phosphate + S-adenosyl-L-homocysteine + H(+). It participates in phospholipid metabolism; phosphatidylcholine biosynthesis; phosphocholine from phosphoethanolamine. With respect to regulation, feedback inhibition by phosphatidylcholine. Catalyzes the first step in the synthesis of phosphocholine by converting phosphoethanolamine into phospho-monomethylethanolamine (N-methylethanolamine phosphate). Phosphocholine is a precursor for phosphatidylcholine, a major component in membranes and a precursor itself in the production of glycoconjugates secreted by parasitic nematodes to avoid host immune responses. The chain is Phosphoethanolamine N-methyltransferase 1 from Caenorhabditis elegans.